The primary structure comprises 623 residues: AM-toxin biosynthesis protein 12-2 (623 aa).

The interval 110–129 is disordered; the sequence is TIPGTSQAKNTEPDHQASGL.

It participates in mycotoxin biosynthesis. Part of the gene clusters that mediate the biosynthesis of AM-toxins, host-selective toxins (HSTs) causing Alternaria blotch on apple, a worldwide distributed disease. AM-toxins are cyclic depsipeptides containing the 3 residues 2-hydroxy-isovaleric acid (2-HIV), dehydroalanine, L-alanine which are common for all 3 AM-toxins I to III. The fourth precursor is L-alpha-amino-methoxyphenyl-valeric acid (L-Amv) for AM-toxin I, L-alpha-amino-phenyl-valeric acid (L-Apv) for AM-toxin II, and L-alpha-amino-hydroxyphenyl-valeric acid (L-Ahv) for AM-toxin III. AM-toxins have two target sites for affecting susceptible apple cells; they cause invagination of the plasma membrane and electrolyte loss and chloroplast disorganization. The non-ribosomal peptide synthetase AMT1 contains 4 catalytic modules and is responsible for activation of each residue in AM-toxin. The aldo-keto reductase AMT2 catalyzes the conversion of 2-keto-isovaleric acid (2-KIV) to 2-hydroxy-isovaleric acid (2-HIV), one of the precursor residues incorporated by AMT1 during AM-toxin biosynthesis, by reduction of its ketone to an alcohol. The cytochrome P450 monooxygenase AMT3 and the thioesterase AMT4 are also important for AM-toxin production, but their exact function within the AM-toxin biosynthesis are not known yet. Up to 21 proteins (including AMT1 to AMT4) are predicted to be involved in AM-toxin biosynthesis since their expression ishighly up-regulated in AM-toxin-producing cultures. In Alternaria alternata (Alternaria rot fungus), this protein is AM-toxin biosynthesis protein 12-2.